We begin with the raw amino-acid sequence, 108 residues long: ATP synthase peripheral stalk subunit F6, mitochondrial (108 aa).

The N-terminal 32 residues, 1–32 (MILQRLFRFSSIIRSAVSVHFRRNIGVTAVAF), are a transit peptide targeting the mitochondrion. Residues lysine 41, lysine 46, and lysine 79 each carry the N6-acetyllysine modification. N6-acetyllysine; alternate is present on residues lysine 84, lysine 94, and lysine 99. 3 positions are modified to N6-succinyllysine; alternate: lysine 84, lysine 94, and lysine 99. N6-acetyllysine is present on lysine 105.

It belongs to the eukaryotic ATPase subunit F6 family. Component of the ATP synthase complex composed at least of ATP5F1A/subunit alpha, ATP5F1B/subunit beta, ATP5MC1/subunit c (homooctomer), MT-ATP6/subunit a, MT-ATP8/subunit 8, ATP5ME/subunit e, ATP5MF/subunit f, ATP5MG/subunit g, ATP5MK/subunit k, ATP5MJ/subunit j, ATP5F1C/subunit gamma, ATP5F1D/subunit delta, ATP5F1E/subunit epsilon, ATP5PF/subunit F6, ATP5PB/subunit b, ATP5PD/subunit d, ATP5PO/subunit OSCP. ATP synthase complex consists of a soluble F(1) head domain (subunits alpha(3) and beta(3)) - the catalytic core - and a membrane F(0) domain - the membrane proton channel (subunits c, a, 8, e, f, g, k and j). These two domains are linked by a central stalk (subunits gamma, delta, and epsilon) rotating inside the F1 region and a stationary peripheral stalk (subunits F6, b, d, and OSCP).

It is found in the mitochondrion. The protein resides in the mitochondrion inner membrane. In terms of biological role, subunit F6, of the mitochondrial membrane ATP synthase complex (F(1)F(0) ATP synthase or Complex V) that produces ATP from ADP in the presence of a proton gradient across the membrane which is generated by electron transport complexes of the respiratory chain. ATP synthase complex consist of a soluble F(1) head domain - the catalytic core - and a membrane F(1) domain - the membrane proton channel. These two domains are linked by a central stalk rotating inside the F(1) region and a stationary peripheral stalk. During catalysis, ATP synthesis in the catalytic domain of F(1) is coupled via a rotary mechanism of the central stalk subunits to proton translocation. In vivo, can only synthesize ATP although its ATP hydrolase activity can be activated artificially in vitro. Part of the complex F(0) domain. Part of the complex F(0) domain and the peripheric stalk, which acts as a stator to hold the catalytic alpha(3)beta(3) subcomplex and subunit a/ATP6 static relative to the rotary elements. The polypeptide is ATP synthase peripheral stalk subunit F6, mitochondrial (Macaca fascicularis (Crab-eating macaque)).